The chain runs to 773 residues: Probable C-mannosyltransferase DPY19L2 (773 aa).

A disordered region spans residues 1 to 45 (MVGPTRSKLREGSSDRPQSSCTGQARRRWSAATMEPQQERSAPQE). The Nuclear portion of the chain corresponds to 1 to 122 (MVGPTRSKLR…ALQMHRFSHR (122 aa)). A helical transmembrane segment spans residues 123–143 (TLFGLAIFVGILHWLHLITLF). Topologically, residues 144–209 (ENDHHFSHLS…INTVKRFHLY (66 aa)) are perinuclear space. The chain crosses the membrane as a helical span at residues 210–230 (PEVVIAYWYRTIIGIMNLFGI). At 231-256 (ETKTCWNVTRMEPLNEVQSCEGLGDP) the chain is on the nuclear side. Residues 257–277 (ACFYIGVIFILNGLMMGLFFI) form a helical membrane-spanning segment. At 278 to 311 (YSTYLSGSQLGGLITVACYFFNHGEATRVMWTPP) the chain is on the perinuclear space side. A helical transmembrane segment spans residues 312 to 332 (LRESFSYPFLVLQMYILTIIL). Topologically, residues 333-358 (RTSTVHKKHYMALCFSNVAFMLPWQF) are nuclear. The helical transmembrane segment at 359–379 (AQFILFTQIASLFPMYVVGYI) threads the bilayer. Over 380-386 (EPSKFQK) the chain is Perinuclear space. The chain crosses the membrane as a helical span at residues 387 to 407 (IIYVNMSSVALCFILMFGNSM). The Nuclear segment spans residues 408-437 (YLSSYYSSCLLVTWAIMQKKSKIQKLGGTE). A helical membrane pass occupies residues 438 to 458 (LQFWLIQGCFWWCGTIILKFL). Over 459 to 507 (TSKICGVSDHIRLSDLIAARILRYTDFDTLIYTCAPEFDFMEQATPLRY) the chain is Perinuclear space. Residues 508–528 (IKTLLLPLILVITYLIFKKIV) form a helical membrane-spanning segment. Residues 529–548 (RDIMCVLYTNTYVRKQLLDN) are Nuclear-facing. Residues 549–569 (AELIFHTLQLLAFTGLAILIM) form a helical membrane-spanning segment. The Perinuclear space portion of the chain corresponds to 570 to 590 (RLKLFLTPHMCIMASLICSQR). Residues 591–611 (LFGWLFCRIHFENVVFGILTM) traverse the membrane as a helical segment. Residues 612–773 (MSIQGCANLH…NSMYRVLKIN (162 aa)) lie on the Nuclear side of the membrane.

It belongs to the dpy-19 family. Interacts with FAM209. Predominantly expressed in testis. Present in testis but absent from epididymal sperm (at protein level).

Its subcellular location is the nucleus inner membrane. In terms of biological role, probable C-mannosyltransferase that mediates C-mannosylation of tryptophan residues on target proteins. Functionally, required during spermatogenesis for sperm head elongation and acrosome formation. Also plays a role in acrosome attachment to the nuclear envelope. This chain is Probable C-mannosyltransferase DPY19L2 (Dpy19l2), found in Mus musculus (Mouse).